Reading from the N-terminus, the 1202-residue chain is Inner capsid protein VP3 (1202 aa).

2 disordered regions span residues 1–45 (MRPI…SGKI) and 73–99 (YTSKDSVQHGGSSITYTSNTTGNPRVT). Residues 10–21 (NQERTTTKHQET) show a composition bias toward basic and acidic residues. Residues 27–45 (NEQTTSDQRFTRSSNSGKI) are compositionally biased toward polar residues.

This sequence belongs to the turreted BTV-fold inner capsid family. In terms of assembly, homodecamer; each decamer is made up of two conformers of VP2, called VP2A and VP2B. 12 homodecamers assemble to form an icosahedral capsid.

It is found in the virion. In terms of biological role, inner capsid protein that self-assembles to form an icosahedral capsid with a T=2 symmetry, which consists of 120 copies of VP2, with channels at each of its five-fold vertices. This capsid constitutes the innermost concentric layer of the viral mature particle. In Aedes pseudoscutellaris reovirus (isolate France) (ApRV), this protein is Inner capsid protein VP3 (S3).